Reading from the N-terminus, the 170-residue chain is MSQLPLELGLSFNGGDILFQLLAMLVLLALLKKFALGPLLNIMKQREDHIAGEITSAEERNKEAQKLIEEQRVLLKEAKQESQSLIENAKKLGEKQKEDIIQAARAESERLKEAARTEIVKEKEQAVSALREQVASLSVLIASKVIEKELDEQAQEQLIQDYLKEVGESR.

Residues 20-42 form a helical membrane-spanning segment; it reads QLLAMLVLLALLKKFALGPLLNI.

It belongs to the ATPase B chain family. As to quaternary structure, F-type ATPases have 2 components, F(1) - the catalytic core - and F(0) - the membrane proton channel. F(1) has five subunits: alpha(3), beta(3), gamma(1), delta(1), epsilon(1). F(0) has three main subunits: a(1), b(2) and c(10-14). The alpha and beta chains form an alternating ring which encloses part of the gamma chain. F(1) is attached to F(0) by a central stalk formed by the gamma and epsilon chains, while a peripheral stalk is formed by the delta and b chains.

It is found in the cell membrane. In terms of biological role, f(1)F(0) ATP synthase produces ATP from ADP in the presence of a proton or sodium gradient. F-type ATPases consist of two structural domains, F(1) containing the extramembraneous catalytic core and F(0) containing the membrane proton channel, linked together by a central stalk and a peripheral stalk. During catalysis, ATP synthesis in the catalytic domain of F(1) is coupled via a rotary mechanism of the central stalk subunits to proton translocation. Functionally, component of the F(0) channel, it forms part of the peripheral stalk, linking F(1) to F(0). In Bacillus velezensis (strain DSM 23117 / BGSC 10A6 / LMG 26770 / FZB42) (Bacillus amyloliquefaciens subsp. plantarum), this protein is ATP synthase subunit b.